The following is a 478-amino-acid chain: Protein nucleotidyltransferase YdiU (478 aa).

Positions 74, 76, 77, 97, 109, 110, 160, and 167 each coordinate ATP. Catalysis depends on aspartate 236, which acts as the Proton acceptor. Asparagine 237 and aspartate 246 together coordinate Mg(2+). Aspartate 246 serves as a coordination point for ATP.

This sequence belongs to the SELO family. Requires Mg(2+) as cofactor. Mn(2+) serves as cofactor.

It catalyses the reaction L-seryl-[protein] + ATP = 3-O-(5'-adenylyl)-L-seryl-[protein] + diphosphate. The catalysed reaction is L-threonyl-[protein] + ATP = 3-O-(5'-adenylyl)-L-threonyl-[protein] + diphosphate. It carries out the reaction L-tyrosyl-[protein] + ATP = O-(5'-adenylyl)-L-tyrosyl-[protein] + diphosphate. The enzyme catalyses L-histidyl-[protein] + UTP = N(tele)-(5'-uridylyl)-L-histidyl-[protein] + diphosphate. It catalyses the reaction L-seryl-[protein] + UTP = O-(5'-uridylyl)-L-seryl-[protein] + diphosphate. The catalysed reaction is L-tyrosyl-[protein] + UTP = O-(5'-uridylyl)-L-tyrosyl-[protein] + diphosphate. Functionally, nucleotidyltransferase involved in the post-translational modification of proteins. It can catalyze the addition of adenosine monophosphate (AMP) or uridine monophosphate (UMP) to a protein, resulting in modifications known as AMPylation and UMPylation. The protein is Protein nucleotidyltransferase YdiU of Chromobacterium violaceum (strain ATCC 12472 / DSM 30191 / JCM 1249 / CCUG 213 / NBRC 12614 / NCIMB 9131 / NCTC 9757 / MK).